The sequence spans 313 residues: Transcription initiation factor IIB 2 (313 aa).

The segment at 13-44 adopts a TFIIB-type zinc-finger fold; that stretch reads APKRCPECHSEHLIRDYEHGELICADCGAVIE. 4 residues coordinate Zn(2+): Cys17, Cys20, Cys36, and Cys39. Repeat copies occupy residues 130–213 and 224–305.

Belongs to the TFIIB family.

Its function is as follows. Stabilizes TBP binding to an archaeal box-A promoter. Also responsible for recruiting RNA polymerase II to the pre-initiation complex (DNA-TBP-TFIIB). This is Transcription initiation factor IIB 2 from Thermoplasma volcanium (strain ATCC 51530 / DSM 4299 / JCM 9571 / NBRC 15438 / GSS1).